We begin with the raw amino-acid sequence, 551 residues long: Tetrachloroethene reductive dehalogenase (551 aa).

A signal peptide (tat-type signal) is located at residues 1–39 (MGEINRRNFLKASMLGAAAAAVASASVVKGVVSPLVADA). The 30-residue stretch at 411–440 (PRKFGVREFCRLCKKCADACPAQAISHEKD) folds into the 4Fe-4S ferredoxin-type 1 domain. [4Fe-4S] cluster contacts are provided by Cys420, Cys423, Cys426, Cys430, Cys467, Cys478, Cys481, and Cys485. Residues 478-496 (CSNCVAVCSWNKVETWNHD) enclose the 4Fe-4S ferredoxin-type 2 domain.

Belongs to the PceA family. Requires [4Fe-4S] cluster as cofactor. The cofactor is corrinoid. Predicted to be exported by the Tat system. The position of the signal peptide cleavage has been experimentally proven.

The protein localises to the cell membrane. The catalysed reaction is trichloroethene + chloride + A + H(+) = tetrachloroethene + AH2. The enzyme catalyses trichloroethene + AH2 = (Z)-1,2-dichloroethene + chloride + A + H(+). Its function is as follows. Catalyzes the reductive dechlorination of tetrachloroethene (PCE) to trichloroethene (TCE) and of trichloroethene to cis-1,2-dichloroethene (DCE). Reduced methyl viologen can act as the artificial electron donor. The protein is Tetrachloroethene reductive dehalogenase of Desulfitobacterium hafniense (Desulfitobacterium frappieri).